The chain runs to 273 residues: SPRY domain-containing SOCS box protein 4 (273 aa).

The tract at residues 1–34 (MGQKLSGSLKSVEVREPALRPAKRELRGAEPGRP) is disordered. Over residues 12–34 (VEVREPALRPAKRELRGAEPGRP) the composition is skewed to basic and acidic residues. One can recognise a B30.2/SPRY domain in the interval 34–233 (PARLDQLLDM…MRYINGLDPE (200 aa)). The SOCS box domain maps to 234-273 (PLPLMDLCRRSIRSALGRQRLQDISSLPLPQSLKNYLQYQ).

This sequence belongs to the SPSB family. Component of the probable ECS(SPSB4) E3 ubiquitin-protein ligase complex which contains CUL5, RNF7/RBX2, Elongin BC complex and SPSB4. Interacts with CUL5; RNF7; ELOB and ELOC. Interacts with MET. Interacts (via B30.2/SPRY domain) with PAWR; this interaction occurs in association with the Elongin BC complex. Interacts with NOS2. Interacts with EPHB2.

The protein localises to the cytoplasm. The protein resides in the cytosol. It functions in the pathway protein modification; protein ubiquitination. Its function is as follows. Substrate recognition component of a SCF-like ECS (Elongin BC-CUL2/5-SOCS-box protein) E3 ubiquitin-protein ligase complex which mediates the ubiquitination and subsequent proteasomal degradation of target proteins. Negatively regulates nitric oxide (NO) production and limits cellular toxicity in activated macrophages by mediating the ubiquitination and proteasomal degradation of NOS2. Acts as a bridge which links NOS2 with the ECS E3 ubiquitin ligase complex components ELOC and CUL5. Diminishes EphB2-dependent cell repulsive responses by mediating the ubiquitination and degradation of EphB2/CTF2. Regulates cellular clock function by mediating the ubiquitin/proteasome-dependent degradation of the circadian transcriptional repressor NR1D1. The chain is SPRY domain-containing SOCS box protein 4 (SPSB4) from Homo sapiens (Human).